Consider the following 27-residue polypeptide: Phospholipase A2 taicatoxin (27 aa).

Belongs to the phospholipase A2 family. Group I subfamily. As to quaternary structure, heterotrimer composed of an alpha-neurotoxin-like peptide of 8 kDa (AC P0CJ35), this neurotoxic phospholipase of 16 kDa and a serine protease inhibitor of 7 kDa (AC B7S4N9) at an approximate stoichiometry of 1:1:4; non-covalently linked. Ca(2+) serves as cofactor. In terms of processing, contains 7 disulfide bonds. Expressed by the venom gland.

Its subcellular location is the secreted. The enzyme catalyses a 1,2-diacyl-sn-glycero-3-phosphocholine + H2O = a 1-acyl-sn-glycero-3-phosphocholine + a fatty acid + H(+). Its function is as follows. Heterotrimer: blocks the voltage-dependent L-type calcium channels from the heart, and the small conductance calcium-activated potassium channels in the chromaffin cells and in the brain. Is very toxic to mice. Monomer: Snake venom phospholipase A2 (PLA2) that has neurotoxic activities. Voltage-dependently affects ionic currents in chick (Gallus domesticus) dorsal root ganglion cells. PLA2 catalyzes the calcium-dependent hydrolysis of the 2-acyl groups in 3-sn-phosphoglycerides. In Oxyuranus scutellatus scutellatus (Australian taipan), this protein is Phospholipase A2 taicatoxin.